We begin with the raw amino-acid sequence, 355 residues long: S-adenosylmethionine:tRNA ribosyltransferase-isomerase (355 aa).

Belongs to the QueA family. In terms of assembly, monomer.

It is found in the cytoplasm. The enzyme catalyses 7-aminomethyl-7-carbaguanosine(34) in tRNA + S-adenosyl-L-methionine = epoxyqueuosine(34) in tRNA + adenine + L-methionine + 2 H(+). Its pathway is tRNA modification; tRNA-queuosine biosynthesis. Functionally, transfers and isomerizes the ribose moiety from AdoMet to the 7-aminomethyl group of 7-deazaguanine (preQ1-tRNA) to give epoxyqueuosine (oQ-tRNA). In Erwinia tasmaniensis (strain DSM 17950 / CFBP 7177 / CIP 109463 / NCPPB 4357 / Et1/99), this protein is S-adenosylmethionine:tRNA ribosyltransferase-isomerase.